We begin with the raw amino-acid sequence, 123 residues long: Small ribosomal subunit protein uS12 (123 aa).

The interval 1-32 (MPTIQQLVRKGRTDKISKNKTPALKGSPQRRG) is disordered. D89 carries the 3-methylthioaspartic acid modification. Positions 103–123 (DTQGVKGRKQARSRYGAKKEK) are disordered. A compositionally biased stretch (basic residues) spans 108 to 123 (KGRKQARSRYGAKKEK).

It belongs to the universal ribosomal protein uS12 family. As to quaternary structure, part of the 30S ribosomal subunit. Contacts proteins S8 and S17. May interact with IF1 in the 30S initiation complex.

Functionally, with S4 and S5 plays an important role in translational accuracy. Its function is as follows. Interacts with and stabilizes bases of the 16S rRNA that are involved in tRNA selection in the A site and with the mRNA backbone. Located at the interface of the 30S and 50S subunits, it traverses the body of the 30S subunit contacting proteins on the other side and probably holding the rRNA structure together. The combined cluster of proteins S8, S12 and S17 appears to hold together the shoulder and platform of the 30S subunit. This chain is Small ribosomal subunit protein uS12, found in Cutibacterium acnes (strain DSM 16379 / KPA171202) (Propionibacterium acnes).